The chain runs to 261 residues: Protein FAM216A (261 aa).

The tract at residues 1–52 is disordered; the sequence is MPSRCPGVAGPPALARTEGSEGSAGQSYHQNSKGTGEQHKAERIKEGHRMSS. A compositionally biased stretch (polar residues) spans 23 to 35; sequence SAGQSYHQNSKGT. Positions 36 to 49 are enriched in basic and acidic residues; that stretch reads GEQHKAERIKEGHR.

The protein belongs to the FAM216 family.

The sequence is that of Protein FAM216A (Fam216a) from Rattus norvegicus (Rat).